Reading from the N-terminus, the 426-residue chain is MLDLKRIRSNPEEIKKALAGRGEDFDVSVIDKVLQLDEERRNILVEVESLKNKRKQESAKIPQFKKEGKNVDDIMAEMKELAGKIKKLDERLSEIDGSIEYIMLRIPNIPNPNVPNGDSDEDNVEIRRWGEATTFEFEPKAHWDLGVNLDILDFERAGKVTGSRFTFYKGLGARLERAVINYYLDTHIDEHGYTEILPPYMVNRKSMTGTGQLPKFEEDAFRLEEQDYFLIPTAEVPVTNLYRDEILNGSDLPMKHVAYSACFRSEAGSAGRDTRGLVRQHQFNKVELVKFTKPEQSYEELEKLTKDAEDVLQGLGIPYRVVRICKGDLGFTAALKYDIEVWMPSYNRYVEISSCSNFEDFQSRRANIKYRENPKDKPNFVHTLNGSGVAVGRTVAAIIENFQQADGTIIIPEKLRPYMGGKDVIK.

Threonine 233–glutamate 235 provides a ligand contact to L-serine. Residue arginine 264 to glutamate 266 coordinates ATP. Glutamate 287 provides a ligand contact to L-serine. Residue glutamate 351 to serine 354 participates in ATP binding. Serine 387 contributes to the L-serine binding site.

It belongs to the class-II aminoacyl-tRNA synthetase family. Type-1 seryl-tRNA synthetase subfamily. As to quaternary structure, homodimer. The tRNA molecule binds across the dimer.

It localises to the cytoplasm. The enzyme catalyses tRNA(Ser) + L-serine + ATP = L-seryl-tRNA(Ser) + AMP + diphosphate + H(+). It carries out the reaction tRNA(Sec) + L-serine + ATP = L-seryl-tRNA(Sec) + AMP + diphosphate + H(+). It participates in aminoacyl-tRNA biosynthesis; selenocysteinyl-tRNA(Sec) biosynthesis; L-seryl-tRNA(Sec) from L-serine and tRNA(Sec): step 1/1. Catalyzes the attachment of serine to tRNA(Ser). Is also able to aminoacylate tRNA(Sec) with serine, to form the misacylated tRNA L-seryl-tRNA(Sec), which will be further converted into selenocysteinyl-tRNA(Sec). The sequence is that of Serine--tRNA ligase from Clostridium tetani (strain Massachusetts / E88).